Reading from the N-terminus, the 320-residue chain is Ribosome biogenesis protein BRX1 homolog 2 (320 aa).

The disordered stretch occupies residues 1–40; it reads MGRKRKHSETEAPAPVKKSDEPAPDRPKRTLLGWKDKSEG. The segment covering 17–40 has biased composition (basic and acidic residues); that stretch reads KKSDEPAPDRPKRTLLGWKDKSEG. The 204-residue stretch at 57-260 folds into the Brix domain; that stretch reads EKVLVTCSRR…PIKIFAGSFG (204 aa). The segment at 297–320 is disordered; that stretch reads RKKMHELSNPLEPDEFADMWKDDE. Over residues 308–320 the composition is skewed to acidic residues; the sequence is EPDEFADMWKDDE.

It belongs to the BRX1 family. In terms of tissue distribution, expressed in roots, rosette leaves, stems, flowers, siliques and seeds.

The protein resides in the nucleus. It localises to the nucleolus. Involved in pre-rRNA processing and required for biogenesis of the large (60S) ribosomal subunit. Required for proper development. The protein is Ribosome biogenesis protein BRX1 homolog 2 of Arabidopsis thaliana (Mouse-ear cress).